The following is a 452-amino-acid chain: Exodeoxyribonuclease 7 large subunit (452 aa).

Belongs to the XseA family. As to quaternary structure, heterooligomer composed of large and small subunits.

It is found in the cytoplasm. The catalysed reaction is Exonucleolytic cleavage in either 5'- to 3'- or 3'- to 5'-direction to yield nucleoside 5'-phosphates.. Bidirectionally degrades single-stranded DNA into large acid-insoluble oligonucleotides, which are then degraded further into small acid-soluble oligonucleotides. The polypeptide is Exodeoxyribonuclease 7 large subunit (Bacillus cereus (strain 03BB102)).